A 408-amino-acid polypeptide reads, in one-letter code: Alpha-2Da adrenergic receptor (408 aa).

The Extracellular segment spans residues 1 to 30; sequence MSVTPTANSTEEAANITASPRLWPYTEPAS. Residues Asn8 and Asn15 are each glycosylated (N-linked (GlcNAc...) asparagine). Residues 31–55 traverse the membrane as a helical segment; it reads AIIILVVSLIILLTIVGNVLVIVAV. Residues 56–67 lie on the Cytoplasmic side of the membrane; sequence LTSRALRAPQNL. A helical membrane pass occupies residues 68 to 93; the sequence is FLVSLACADILVATLVIPFSLANEIM. At 94–103 the chain is on the extracellular side; the sequence is GYWYFGSTWC. Cys103 and Cys176 are oxidised to a cystine. A helical membrane pass occupies residues 104-126; it reads AFYLALDVLFCTSSIVHLCAISL. The Cytoplasmic portion of the chain corresponds to 127-147; sequence DRYWSVTKAVRYNLKRTPRRI. Residues 148–170 form a helical membrane-spanning segment; that stretch reads KCMIAVVWLISAVISFPPLIMTK. Residues 171–181 lie on the Extracellular side of the membrane; it reads HDEKECLINDE. The chain crosses the membrane as a helical span at residues 182 to 205; it reads TWYILSSCAVSFFAPGLIMITVYC. At 206–332 the chain is on the cytoplasmic side; the sequence is KIYRVAKQRS…QMREKRFTFV (127 aa). A disordered region spans residues 242 to 306; sequence FEKESPSSNS…SCRVSWAAHQ (65 aa). The span at 260–270 shows a compositional bias: acidic residues; that stretch reads ELDDIDLEESA. The span at 277-286 shows a compositional bias: basic residues; sequence RGSRFSKRRR. Residues 333–356 traverse the membrane as a helical segment; it reads LAVVMGVFVLCWFPFFFTYSLQAV. The Extracellular segment spans residues 357 to 369; sequence CGERCGPPEALFK. The helical transmembrane segment at 370–390 threads the bilayer; it reads LFFWIGYCNSSVNPIIYTIFN. The Cytoplasmic segment spans residues 391–408; the sequence is RDFRKAFKKVVCWSAQRT.

The protein belongs to the G-protein coupled receptor 1 family. Adrenergic receptor subfamily. ADRA2D sub-subfamily.

The protein localises to the cell membrane. Functionally, alpha-2 adrenergic receptors mediate the catecholamine-induced inhibition of adenylate cyclase through the action of G proteins. The order of potency for this receptor is dexmedetomidine &gt; norepinephrine &gt; epinephrine &gt; oxymetazoline. In Danio rerio (Zebrafish), this protein is Alpha-2Da adrenergic receptor (adra2da).